Consider the following 371-residue polypeptide: MSTNNSDIRVVVGMSGGVDSSVTAHILKEQGYDVIGIFMKNWDDTDEFGVCTATEDYDDVIRVANQIGIPYYAVNFEKEYWDKVFTYFLDEYKLGRTPNPDVMCNKEIKFKAFLEHAESLGADYVATGHYAQVKKVGDEIELLRGVDNNKDQTYFLNQLSQDQLKKVMFPLGGMEKTEVREIAKKAGLATANKKDSTGICFIGERNFKQFLSEYLPAQPGEMRTLNGEVLGKHDGLMYYTIGQRHGLGIGGDGEPWFVVGKDLKENVLFVEQGFHHETLYSDSLIATDISFTTNAEKPKTIECTAKFRYRQTDTKVTVHLREDGTAEVVFADPVRAITPGQAVVFYDGDICLGGGTIDTVWKNGAKLDYVG.

Residues 13–20 and Met-39 contribute to the ATP site; that span reads GMSGGVDS. The interval 99 to 101 is interaction with target base in tRNA; sequence NPD. Cys-104 acts as the Nucleophile in catalysis. The cysteines at positions 104 and 200 are disulfide-linked. Gly-128 is a binding site for ATP. Residues 150 to 152 are interaction with tRNA; the sequence is KDQ. The active-site Cysteine persulfide intermediate is the Cys-200. Residues 308-309 form an interaction with tRNA region; it reads RY.

The protein belongs to the MnmA/TRMU family.

Its subcellular location is the cytoplasm. The catalysed reaction is S-sulfanyl-L-cysteinyl-[protein] + uridine(34) in tRNA + AH2 + ATP = 2-thiouridine(34) in tRNA + L-cysteinyl-[protein] + A + AMP + diphosphate + H(+). Functionally, catalyzes the 2-thiolation of uridine at the wobble position (U34) of tRNA, leading to the formation of s(2)U34. The protein is tRNA-specific 2-thiouridylase MnmA of Listeria monocytogenes serotype 4b (strain CLIP80459).